Reading from the N-terminus, the 424-residue chain is Histidine--tRNA ligase (424 aa).

This sequence belongs to the class-II aminoacyl-tRNA synthetase family. Homodimer.

The protein resides in the cytoplasm. The catalysed reaction is tRNA(His) + L-histidine + ATP = L-histidyl-tRNA(His) + AMP + diphosphate + H(+). This is Histidine--tRNA ligase from Salmonella heidelberg (strain SL476).